Here is a 463-residue protein sequence, read N- to C-terminus: Hexose-6-phosphate:phosphate antiporter (463 aa).

At 1–24 (MLAFLNQVRKPTLDLPLEVRRKMW) the chain is on the cytoplasmic side. The chain crosses the membrane as a helical span at residues 25–45 (FKPFMQSYLVVFIGYLTMYLI). Over 46-60 (RKNFNIAQNDMISTY) the chain is Periplasmic. The chain crosses the membrane as a helical span at residues 61-81 (GLSMTQLGMIGLGFSITYGVG). The Cytoplasmic portion of the chain corresponds to 82-96 (KTLVSYYADGKNTKQ). Residues 97-117 (FLPFMLILSAICMLGFSASMG) traverse the membrane as a helical segment. At 118–120 (SGS) the chain is on the periplasmic side. Residues 121–141 (VSLFLMIAFYALSGFFQSTGG) traverse the membrane as a helical segment. Over 142–159 (SCSYSTITKWTPRRKRGT) the chain is Cytoplasmic. A helical transmembrane segment spans residues 160-180 (FLGFWNISHNLGGAGAAGVAL). Residues 181–189 (FGANYLFDG) are Periplasmic-facing. A helical membrane pass occupies residues 190-210 (HVIGMFIFPSIIALIVGFIGL). At 211 to 259 (RYGSDSPESYGLGKAEELFGEEISEEDKETESTDMTKWQIFVEYVLKNK) the chain is on the cytoplasmic side. Residues 260–280 (VIWLLCFANIFLYVVRIGIDQ) form a helical membrane-spanning segment. The Periplasmic portion of the chain corresponds to 281–297 (WSTVYAFQELKLSKAVA). A helical transmembrane segment spans residues 298–318 (IQGFTLFEAGALVGTLLWGWL). The Cytoplasmic portion of the chain corresponds to 319–326 (SDLANGRR). A helical transmembrane segment spans residues 327–347 (GLVACIALALIIATLGVYQHA). Over 348–357 (SNEYIYLASL) the chain is Periplasmic. The chain crosses the membrane as a helical span at residues 358 to 378 (FALGFLVFGPQLLIGVAAVGF). At 379 to 382 (VPKK) the chain is on the cytoplasmic side. The chain crosses the membrane as a helical span at residues 383–403 (AIGAADGIKGTFAYLIGDSFA). At 404 to 425 (KLGLGMIADGTPVFGLTGWAGT) the chain is on the periplasmic side. A helical transmembrane segment spans residues 426–446 (FAALDIAAIGCICLMAIVAVM). The Cytoplasmic portion of the chain corresponds to 447–463 (EERKIRREKKIQQLTVA).

Belongs to the major facilitator superfamily. Organophosphate:Pi antiporter (OPA) (TC 2.A.1.4) family.

The protein localises to the cell inner membrane. In terms of biological role, mediates the exchange of external hexose 6-phosphate and internal inorganic phosphate. This chain is Hexose-6-phosphate:phosphate antiporter (uhpT), found in Escherichia coli O157:H7.